We begin with the raw amino-acid sequence, 150 residues long: MPEFQLQRRLAADIAGVGLNNIKFNPERLEEVEEALTREDIKKLIKERAVIVNPKRGISSGRLKERKHKRRSKGEGRKHGSRKGKSGARTGDKEIWINKIRKIRRYIRWLRDNNVIDKHTYRLLYKRAKGNYFKNLSDVKSYLRQMGHKV.

Residues 56-90 (RGISSGRLKERKHKRRSKGEGRKHGSRKGKSGART) form a disordered region.

Belongs to the eukaryotic ribosomal protein eL19 family. In terms of assembly, part of the 50S ribosomal subunit.

In terms of biological role, binds to the 23S rRNA. The chain is Large ribosomal subunit protein eL19 from Sulfolobus acidocaldarius (strain ATCC 33909 / DSM 639 / JCM 8929 / NBRC 15157 / NCIMB 11770).